The chain runs to 145 residues: D-aminoacyl-tRNA deacylase (145 aa).

A Gly-cisPro motif, important for rejection of L-amino acids motif is present at residues 137 to 138 (GP).

The protein belongs to the DTD family. As to quaternary structure, homodimer.

It is found in the cytoplasm. It carries out the reaction glycyl-tRNA(Ala) + H2O = tRNA(Ala) + glycine + H(+). The enzyme catalyses a D-aminoacyl-tRNA + H2O = a tRNA + a D-alpha-amino acid + H(+). Functionally, an aminoacyl-tRNA editing enzyme that deacylates mischarged D-aminoacyl-tRNAs. Also deacylates mischarged glycyl-tRNA(Ala), protecting cells against glycine mischarging by AlaRS. Acts via tRNA-based rather than protein-based catalysis; rejects L-amino acids rather than detecting D-amino acids in the active site. By recycling D-aminoacyl-tRNA to D-amino acids and free tRNA molecules, this enzyme counteracts the toxicity associated with the formation of D-aminoacyl-tRNA entities in vivo and helps enforce protein L-homochirality. The polypeptide is D-aminoacyl-tRNA deacylase (Shewanella baltica (strain OS155 / ATCC BAA-1091)).